The sequence spans 464 residues: Cystathionine beta-lyase, chloroplastic (464 aa).

The N-terminal 55 residues, 1–55 (MTSSLSLHSSFVPSFADLSDRGLISKNSPTSVSISKVPTWEKKQISNRNSFKLNC), are a transit peptide targeting the chloroplast. The pyridoxal 5'-phosphate site is built by Y127, R129, G157, M158, S275, and T277. An N6-(pyridoxal phosphate)lysine modification is found at K278.

This sequence belongs to the trans-sulfuration enzymes family. As to quaternary structure, forms homodimers. May form homotetramers from two homodimers. It depends on pyridoxal 5'-phosphate as a cofactor.

The protein resides in the plastid. It localises to the chloroplast. It carries out the reaction L,L-cystathionine + H2O = L-homocysteine + pyruvate + NH4(+). It catalyses the reaction an S-substituted L-cysteine + H2O = a thiol + pyruvate + NH4(+). Its pathway is amino-acid biosynthesis; L-methionine biosynthesis via de novo pathway; L-homocysteine from L-cystathionine: step 1/1. In terms of biological role, catalyzes the penultimate step in the de novo biosynthesis of methionine. Its role in methionine metabolism may affect plant development in different organs, probably by modifying plant auxin transport. Its cysteine desulfhydrase activity may be involved in hydrogen sulfur production using L-cysteine as a substrate. This is Cystathionine beta-lyase, chloroplastic from Arabidopsis thaliana (Mouse-ear cress).